The following is a 150-amino-acid chain: UPF0756 membrane protein HD_1071 (150 aa).

Helical transmembrane passes span 1–21 (MSLQ…LGVL), 52–72 (YGLT…IVSG), 82–102 (ILSW…WLGG), and 114–134 (IITG…GIPV).

It belongs to the UPF0756 family.

The protein localises to the cell membrane. This is UPF0756 membrane protein HD_1071 from Haemophilus ducreyi (strain 35000HP / ATCC 700724).